The chain runs to 502 residues: Lipoyl synthase, apicoplast (502 aa).

A signal peptide spans 1-16 (MNFLVLFFSYSIFVLP). Positions 192, 197, 203, 218, 222, 225, and 433 each coordinate [4Fe-4S] cluster. The Radical SAM core domain maps to 204–422 (WNIGTATIML…KDVGLKMGFK (219 aa)).

Belongs to the radical SAM superfamily. Lipoyl synthase family. The cofactor is [4Fe-4S] cluster.

The protein localises to the plastid. The protein resides in the apicoplast. It carries out the reaction [[Fe-S] cluster scaffold protein carrying a second [4Fe-4S](2+) cluster] + N(6)-octanoyl-L-lysyl-[protein] + 2 oxidized [2Fe-2S]-[ferredoxin] + 2 S-adenosyl-L-methionine + 4 H(+) = [[Fe-S] cluster scaffold protein] + N(6)-[(R)-dihydrolipoyl]-L-lysyl-[protein] + 4 Fe(3+) + 2 hydrogen sulfide + 2 5'-deoxyadenosine + 2 L-methionine + 2 reduced [2Fe-2S]-[ferredoxin]. The protein operates within protein modification; protein lipoylation via endogenous pathway; protein N(6)-(lipoyl)lysine from octanoyl-[acyl-carrier-protein]: step 2/2. Functionally, catalyzes the radical-mediated insertion of two sulfur atoms into the C-6 and C-8 positions of the octanoyl moiety bound to the lipoyl domains of lipoate-dependent enzymes, thereby converting the octanoylated domains into lipoylated derivatives. In Plasmodium yoelii yoelii, this protein is Lipoyl synthase, apicoplast.